A 313-amino-acid polypeptide reads, in one-letter code: Foldase protein PrsA (313 aa).

The signal sequence occupies residues methionine 1–alanine 20. The N-palmitoyl cysteine moiety is linked to residue cysteine 21. Residue cysteine 21 is the site of S-diacylglycerol cysteine attachment. The 99-residue stretch at threonine 143 to lysine 241 folds into the PpiC domain.

The protein belongs to the PrsA family.

Its subcellular location is the cell membrane. It catalyses the reaction [protein]-peptidylproline (omega=180) = [protein]-peptidylproline (omega=0). In terms of biological role, plays a major role in protein secretion by helping the post-translocational extracellular folding of several secreted proteins. This Streptococcus pneumoniae (strain ATCC BAA-255 / R6) protein is Foldase protein PrsA.